A 527-amino-acid chain; its full sequence is Ribonuclease Y (527 aa).

A helical membrane pass occupies residues 21 to 41 (ILAIFFSFIIGIVFGGMALFV). Residues 78 to 97 (READKTRNSAETELKERRSE) form a disordered region. The KH domain maps to 217 to 302 (TTNVVPLPSD…EVVTKAKEEV (86 aa)). One can recognise an HD domain in the interval 343–436 (VLQHSIEVAQ…VSAADAISSA (94 aa)).

Belongs to the RNase Y family.

The protein resides in the cell membrane. Its function is as follows. Endoribonuclease that initiates mRNA decay. This chain is Ribonuclease Y, found in Dehalococcoides mccartyi (strain ATCC BAA-2100 / JCM 16839 / KCTC 5957 / BAV1).